The following is a 92-amino-acid chain: Small ribosomal subunit protein uS19 (92 aa).

The protein belongs to the universal ribosomal protein uS19 family.

Its function is as follows. Protein S19 forms a complex with S13 that binds strongly to the 16S ribosomal RNA. In Trichormus variabilis (strain ATCC 29413 / PCC 7937) (Anabaena variabilis), this protein is Small ribosomal subunit protein uS19.